We begin with the raw amino-acid sequence, 415 residues long: Glutamyl-tRNA reductase (415 aa).

Residues 49-52, serine 106, 111-113, and glutamine 117 contribute to the substrate site; these read TCNR and EPQ. Cysteine 50 acts as the Nucleophile in catalysis. An NADP(+)-binding site is contributed by 186 to 191; it reads GAGETI.

The protein belongs to the glutamyl-tRNA reductase family. Homodimer.

It carries out the reaction (S)-4-amino-5-oxopentanoate + tRNA(Glu) + NADP(+) = L-glutamyl-tRNA(Glu) + NADPH + H(+). It participates in porphyrin-containing compound metabolism; protoporphyrin-IX biosynthesis; 5-aminolevulinate from L-glutamyl-tRNA(Glu): step 1/2. Its function is as follows. Catalyzes the NADPH-dependent reduction of glutamyl-tRNA(Glu) to glutamate 1-semialdehyde (GSA). The polypeptide is Glutamyl-tRNA reductase (Teredinibacter turnerae (strain ATCC 39867 / T7901)).